The chain runs to 645 residues: Serine/threonine-protein kinase BUR1 (645 aa).

The region spanning 55–379 (YREEEKLGQG…AMKAKKHPFF (325 aa)) is the Protein kinase domain. Residues 61–69 (LGQGTFGEV) and K84 each bind ATP. The Proton acceptor role is filled by D208. Disordered regions lie at residues 407 to 428 (EMNE…STDN), 442 to 513 (ASIP…KYPA), and 533 to 645 (RYRN…ADYY). Polar residues-rich tracts occupy residues 409-428 (NESM…STDN) and 457-474 (IPAQ…TQNI). A compositionally biased stretch (pro residues) spans 477–486 (EPIPTAPLPK). The segment covering 578 to 598 (NRYQNQDYNTSRNTGYNQYSQ) has biased composition (polar residues).

This sequence belongs to the protein kinase superfamily. CMGC Ser/Thr protein kinase family. CDC2/CDKX subfamily.

The protein resides in the nucleus. It carries out the reaction L-seryl-[protein] + ATP = O-phospho-L-seryl-[protein] + ADP + H(+). The catalysed reaction is L-threonyl-[protein] + ATP = O-phospho-L-threonyl-[protein] + ADP + H(+). The enzyme catalyses [DNA-directed RNA polymerase] + ATP = phospho-[DNA-directed RNA polymerase] + ADP + H(+). In terms of biological role, serine/threonine-protein kinase involved in transcription regulation. Phosphorylates the UBC2/RAD6 ubiquitin-conjugating enzyme (E2), leading to monoubiquitination of histone H2B and the silencing of telomeric-associated genes. Also required for histone H3 methylation. Necessary for the recovery from pheromone-induced growth arrest in the cell cycle G1 phase. The protein is Serine/threonine-protein kinase BUR1 (BUR1) of Kluyveromyces lactis (strain ATCC 8585 / CBS 2359 / DSM 70799 / NBRC 1267 / NRRL Y-1140 / WM37) (Yeast).